A 757-amino-acid chain; its full sequence is Polyribonucleotide nucleotidyltransferase (757 aa).

Residues D532 and D538 each contribute to the Mg(2+) site. The KH domain occupies 598 to 657 (PRVTAIKVPVDKIGEVIGPKGKMINSITEQTGANISIEDDGTVFVGATDGPSAQAAIDMI). One can recognise an S1 motif domain in the interval 669-738 (GERFLGTVVK…NRGKISLIPV (70 aa)).

The protein belongs to the polyribonucleotide nucleotidyltransferase family. Mg(2+) is required as a cofactor.

Its subcellular location is the cytoplasm. The enzyme catalyses RNA(n+1) + phosphate = RNA(n) + a ribonucleoside 5'-diphosphate. Its function is as follows. Involved in mRNA degradation. Catalyzes the phosphorolysis of single-stranded polyribonucleotides processively in the 3'- to 5'-direction. The polypeptide is Polyribonucleotide nucleotidyltransferase (Rhodococcus jostii (strain RHA1)).